Consider the following 172-residue polypeptide: Large ribosomal subunit protein eL20 (172 aa).

The protein belongs to the eukaryotic ribosomal protein eL20 family. As to quaternary structure, component of the large ribosomal subunit. Mature ribosomes consist of a small (40S) and a large (60S) subunit. The 40S subunit contains about 32 different proteins and 1 molecule of RNA (18S). The 60S subunit contains 45 different proteins and 3 molecules of RNA (25S, 5.8S and 5S).

The protein resides in the cytoplasm. Its function is as follows. Component of the ribosome, a large ribonucleoprotein complex responsible for the synthesis of proteins in the cell. The small ribosomal subunit (SSU) binds messenger RNAs (mRNAs) and translates the encoded message by selecting cognate aminoacyl-transfer RNA (tRNA) molecules. The large subunit (LSU) contains the ribosomal catalytic site termed the peptidyl transferase center (PTC), which catalyzes the formation of peptide bonds, thereby polymerizing the amino acids delivered by tRNAs into a polypeptide chain. The nascent polypeptides leave the ribosome through a tunnel in the LSU and interact with protein factors that function in enzymatic processing, targeting, and the membrane insertion of nascent chains at the exit of the ribosomal tunnel. This chain is Large ribosomal subunit protein eL20, found in Candida albicans (strain SC5314 / ATCC MYA-2876) (Yeast).